Reading from the N-terminus, the 122-residue chain is Phycocyanin PC645 alpha-2 subunit (122 aa).

Residues Asp54 and Arg68 each coordinate (2R,3E)-phycocyanobilin. Residues Cys70, Lys76, Glu77, and Cys92 each contribute to the mesobiliverdin site.

The protein belongs to the phycoerythrin family. In terms of assembly, heterotetramer of 2 different alpha chains and 2 identical beta chains which form 2 alpha-beta heterodimers within the heterotetramer. Post-translationally, contains two phycocyanobilin chromophores and one mesobiliverdin chromophore with binding mediated by both the alpha and beta subunits.

It is found in the plastid. The protein resides in the chloroplast thylakoid membrane. Functionally, light-harvesting photosynthetic tetrapyrrole chromophore-protein from the phycobiliprotein complex. The chain is Phycocyanin PC645 alpha-2 subunit from Chroomonas sp. (strain CCMP270).